The primary structure comprises 335 residues: Meiotic expression up-regulated protein 14 (335 aa).

The protein localises to the cytoplasm. It localises to the cytoskeleton. It is found in the microtubule organizing center. Its subcellular location is the spindle pole body. The protein resides in the nucleus membrane. The protein localises to the prospore membrane. In terms of biological role, has a role in nuclear division during meiosis II where it stabilizes the proper segregation of the spindle pole bodies. Also has a role in the formation and extension of the forespore membrane. The sequence is that of Meiotic expression up-regulated protein 14 (meu14) from Schizosaccharomyces pombe (strain 972 / ATCC 24843) (Fission yeast).